The primary structure comprises 297 residues: MGVVESITNSTKPGVTKKSSPEAEDDSNGEASTCGRILIFLSWVLVVLTMPFSLLVCFKVVQEYERAVIFRLGRLVQGGAKGPGIFFILPCIDAYARVDLRTRTYDVPPQEVLTKDSVTVSVDAVVYYRVSNATVSIANVENAHHSTRLLAQTTLRNTMGTRHLHEILSERMTISGSMQLSLDEATEAWGIKVERVEIKDVRLPVQLQRAMAAEAEAAREARAKVIAAEGEQKASRALREASEVIGDSPAALQLRYLQTLNTISAEKNSTIVFPLPIDILTYFMKSKESYEASHSHS.

A compositionally biased stretch (polar residues) spans 1–13 (MGVVESITNSTKP). Residues 1–30 (MGVVESITNSTKPGVTKKSSPEAEDDSNGE) form a disordered region. Residues 37–57 (ILIFLSWVLVVLTMPFSLLVC) traverse the membrane as a helical segment.

The protein belongs to the band 7/mec-2 family.

It is found in the membrane. This is Band 7 protein AAEL010189 from Aedes aegypti (Yellowfever mosquito).